Consider the following 211-residue polypeptide: Large ribosomal subunit protein bL25 (211 aa).

Positions 175-211 (VSEPVEQDLGEESETEEEGAEGEKPAESTGEEPGDDE) are disordered. Residues 179 to 194 (VEQDLGEESETEEEGA) are compositionally biased toward acidic residues.

Belongs to the bacterial ribosomal protein bL25 family. CTC subfamily. As to quaternary structure, part of the 50S ribosomal subunit; part of the 5S rRNA/L5/L18/L25 subcomplex. Contacts the 5S rRNA. Binds to the 5S rRNA independently of L5 and L18.

This is one of the proteins that binds to the 5S RNA in the ribosome where it forms part of the central protuberance. In Kocuria rhizophila (strain ATCC 9341 / DSM 348 / NBRC 103217 / DC2201), this protein is Large ribosomal subunit protein bL25.